The sequence spans 513 residues: Putative zinc finger CCCH domain-containing protein 51 (513 aa).

A disordered region spans residues 155 to 180; it reads SMPRNSPNAGRNLVGHPHSSSKSSSK. Residues 170 to 180 show a composition bias toward low complexity; that stretch reads HPHSSSKSSSK. The segment at 176–204 adopts a C3H1-type zinc-finger fold; sequence KSSSKPCHFHFFRGYCKKGVNCQFFHGSV. Residues 218 to 299 enclose the HTH OST-type domain; it reads SLSKLDMEIR…HGQYHVVLVE (82 aa). Positions 325–411 constitute an RRM domain; sequence NQIYMTFPVH…SELRMTWLKS (87 aa).

The sequence is that of Putative zinc finger CCCH domain-containing protein 51 from Oryza sativa subsp. japonica (Rice).